The chain runs to 196 residues: Peptidyl-tRNA hydrolase (196 aa).

Tyr17 provides a ligand contact to tRNA. His22 acts as the Proton acceptor in catalysis. TRNA is bound by residues Phe68, Asn70, and Asn116.

It belongs to the PTH family. As to quaternary structure, monomer.

It localises to the cytoplasm. It carries out the reaction an N-acyl-L-alpha-aminoacyl-tRNA + H2O = an N-acyl-L-amino acid + a tRNA + H(+). In terms of biological role, hydrolyzes ribosome-free peptidyl-tRNAs (with 1 or more amino acids incorporated), which drop off the ribosome during protein synthesis, or as a result of ribosome stalling. Its function is as follows. Catalyzes the release of premature peptidyl moieties from peptidyl-tRNA molecules trapped in stalled 50S ribosomal subunits, and thus maintains levels of free tRNAs and 50S ribosomes. In Yersinia pestis bv. Antiqua (strain Antiqua), this protein is Peptidyl-tRNA hydrolase.